The primary structure comprises 1389 residues: Carboxypeptidase D (1389 aa).

An N-terminal signal peptide occupies residues 1 to 25 (MAGAARGLLWAALSLCLLPEPLRAA). Residues 26–1308 (HIKKAEAAAA…ENRIFGLPRE (1283 aa)) lie on the Extracellular side of the membrane. The Peptidase M14 1 domain maps to 46–383 (RYLHAAELGQ…ESLLTFIEKV (338 aa)). The segment at 95–133 (LPEARQDGEKKKKEEEEEEEEEEGEEGGGGALPGRPQVK) is disordered. Residues 96–108 (PEARQDGEKKKKE) show a composition bias toward basic and acidic residues. Residues 109–120 (EEEEEEEEEGEE) are compositionally biased toward acidic residues. Zn(2+) is bound by residues His139 and Glu142. N-linked (GlcNAc...) asparagine glycosylation is present at Asn172. The segment at 188–235 (ERAREGDCGGGGGGGGEGGGEPGGRENSRGRDLNRSFPDQFGSAQPDL) is disordered. Residues 195 to 209 (CGGGGGGGGEGGGEP) are compositionally biased toward gly residues. The span at 210–221 (GGRENSRGRDLN) shows a compositional bias: basic and acidic residues. N-linked (GlcNAc...) asparagine glycosylation occurs at Asn221. Residue His260 participates in Zn(2+) binding. The active-site Proton donor/acceptor is the Glu353. Asn402, Asn413, Asn432, and Asn472 each carry an N-linked (GlcNAc...) asparagine glycan. Positions 511 to 801 (RHHHFSDMEI…RSLLQFIKQV (291 aa)) constitute a Peptidase M14 2 domain. Residues His573 and Glu576 each coordinate Zn(2+). Positions 614–639 (SMNPDGYEKSQEGDRGGTVGRNNSNN) are disordered. A compositionally biased stretch (basic and acidic residues) spans 619 to 628 (GYEKSQEGDR). The N-linked (GlcNAc...) asparagine glycan is linked to Asn635. His680 provides a ligand contact to Zn(2+). Catalysis depends on Glu771, which acts as the Proton donor/acceptor. Asn820, Asn876, Asn958, Asn981, Asn1073, and Asn1151 each carry an N-linked (GlcNAc...) asparagine glycan. The 286-residue stretch at 935 to 1220 (RYRPYKDLSE…KSLLSMLVEV (286 aa)) folds into the Peptidase M14 3 domain. Residues 1309 to 1329 (LVVTVAGASMSALVLTACIIW) form a helical membrane-spanning segment. S-palmitoyl cysteine attachment occurs at residues Cys1326, Cys1330, and Cys1332. Over 1330–1389 (CVCSIKSNRHKDGFPTLRQHHDDYEDEIRMMSTGSKKSLLSHEFQDETDTEEETLYSSKH) the chain is Cytoplasmic. Positions 1367-1389 (SLLSHEFQDETDTEEETLYSSKH) are disordered.

The protein belongs to the peptidase M14 family. As to quaternary structure, binds to pre-S, hepatitis B virus large envelope protein, via the carboxypeptidase-like domain. Zn(2+) serves as cofactor. Post-translationally, the N-terminus is blocked. In terms of tissue distribution, expressed in liver, lung, kidney, heart, stomach, pancreas, spleen, gall bladder and intestine, but not in skeletal muscle.

The protein localises to the cell membrane. It catalyses the reaction Releases C-terminal Arg and Lys from polypeptides.. The polypeptide is Carboxypeptidase D (CPD) (Anas platyrhynchos (Mallard)).